Here is a 355-residue protein sequence, read N- to C-terminus: Ubiquinone biosynthesis protein COQ4 homolog, mitochondrial (355 aa).

Zn(2+) contacts are provided by His-134, Asp-135, His-138, and Glu-150.

The protein belongs to the COQ4 family. As to quaternary structure, component of a multi-subunit COQ enzyme complex. It depends on Zn(2+) as a cofactor.

It localises to the mitochondrion inner membrane. It catalyses the reaction a 4-hydroxy-3-methoxy-5-(all-trans-polyprenyl)benzoate + H(+) = a 2-methoxy-6-(all-trans-polyprenyl)phenol + CO2. It participates in cofactor biosynthesis; ubiquinone biosynthesis. In terms of biological role, lyase that catalyzes the C1-decarboxylation of 4-hydroxy-3-methoxy-5-(all-trans-polyprenyl)benzoic acid into 2-methoxy-6-(all-trans-polyprenyl)phenol during ubiquinone biosynthesis. In Plasmodium chabaudi chabaudi, this protein is Ubiquinone biosynthesis protein COQ4 homolog, mitochondrial.